A 624-amino-acid polypeptide reads, in one-letter code: Phosphatidylserine decarboxylase proenzyme 2 (624 aa).

The tract at residues 1–30 (MGHSPSRHNACGGGGGDGESPPSPLPSRFE) is disordered. The C2 domain maps to 16 to 129 (GDGESPPSPL…KDLDEHSEVL (114 aa)). 2 consecutive EF-hand domains span residues 156-191 (TEQS…FGNK) and 192-227 (LAVA…QQEK). Residues Asp-169, Asn-171, Asp-173, Glu-175, Glu-180, Asp-205, Asn-207, Asp-209, and Glu-216 each contribute to the Ca(2+) site. Catalysis depends on charge relay system; for autoendoproteolytic cleavage activity residues Asp-425, His-481, and Ser-569. Ser-569 (schiff-base intermediate with substrate; via pyruvic acid; for decarboxylase activity) is an active-site residue. Ser-569 carries the post-translational modification Pyruvic acid (Ser); by autocatalysis.

The protein belongs to the phosphatidylserine decarboxylase family. PSD-B subfamily. Eukaryotic type II sub-subfamily. Heterodimer of a large membrane-associated beta subunit and a small pyruvoyl-containing alpha subunit. The cofactor is pyruvate. Is synthesized initially as an inactive proenzyme. Formation of the active enzyme involves a self-maturation process in which the active site pyruvoyl group is generated from an internal serine residue via an autocatalytic post-translational modification. Two non-identical subunits are generated from the proenzyme in this reaction, and the pyruvate is formed at the N-terminus of the alpha chain, which is derived from the carboxyl end of the proenzyme. The autoendoproteolytic cleavage occurs by a canonical serine protease mechanism, in which the side chain hydroxyl group of the serine supplies its oxygen atom to form the C-terminus of the beta chain, while the remainder of the serine residue undergoes an oxidative deamination to produce ammonia and the pyruvoyl prosthetic group on the alpha chain. During this reaction, the Ser that is part of the protease active site of the proenzyme becomes the pyruvoyl prosthetic group, which constitutes an essential element of the active site of the mature decarboxylase.

It localises to the vacuole membrane. Its subcellular location is the endoplasmic reticulum membrane. It carries out the reaction a 1,2-diacyl-sn-glycero-3-phospho-L-serine + H(+) = a 1,2-diacyl-sn-glycero-3-phosphoethanolamine + CO2. It functions in the pathway phospholipid metabolism; phosphatidylethanolamine biosynthesis; phosphatidylethanolamine from CDP-diacylglycerol: step 2/2. Functionally, catalyzes the formation of phosphatidylethanolamine (PtdEtn) from phosphatidylserine (PtdSer). Plays a central role in phospholipid metabolism and in the interorganelle trafficking of phosphatidylserine. The polypeptide is Phosphatidylserine decarboxylase proenzyme 2 (Oryza sativa subsp. japonica (Rice)).